The chain runs to 254 residues: MFIAGKNIIFVAGLGGIGLETSREIVKSGPKNLVILDRAPNPAAIAELQALNPKVTVSFYLYDVTVPQSETVKLLKTIFAKLKTIDLLINGAGILDDHQIERTIAVNFTGTVNTTTAIMEFWDKRKGGPGGVVANICSVTGFNSIYQVPVYSASKAAALSFTSSIAKLATITGVTVYSINPGITDTTLVHKFNSWLDVEPHVAEKLLAFPTQTSLACAKNFVKAIEANKNGAIWKLDLGRLDEIEWTKHWDSGI.

10 to 33 lines the NAD(+) pocket; sequence FVAGLGGIGLETSREIVKSGPKNL. A substrate-binding site is contributed by Ser138. Catalysis depends on Tyr151, which acts as the Proton acceptor.

This sequence belongs to the short-chain dehydrogenases/reductases (SDR) family. Homodimer.

The catalysed reaction is a primary alcohol + NAD(+) = an aldehyde + NADH + H(+). The enzyme catalyses a secondary alcohol + NAD(+) = a ketone + NADH + H(+). In Scaptomyza crassifemur (Fruit fly), this protein is Alcohol dehydrogenase (Adh).